A 448-amino-acid polypeptide reads, in one-letter code: Neurexin-1b-beta (448 aa).

Positions M1 to S38 are cleaved as a signal peptide. At G39 to T375 the chain is on the extracellular side. The 199-residue stretch at S71 to V269 folds into the Laminin G-like domain. A helical membrane pass occupies residues G376–M396. The Cytoplasmic portion of the chain corresponds to Y397–V448. Over residues E426–S436 the composition is skewed to basic and acidic residues. A disordered region spans residues E426–V448.

The protein belongs to the neurexin family.

The protein resides in the membrane. In terms of biological role, neuronal cell surface protein that may be involved in cell recognition and cell adhesion. May play a role in formation or maintenance of synaptic junctions. This is Neurexin-1b-beta (nrxn1b) from Danio rerio (Zebrafish).